Reading from the N-terminus, the 166-residue chain is HTH-type transcriptional regulator PetP (166 aa).

The 136-residue stretch at 17–152 (DEQLRKGIEA…FRQVLEAMMD (136 aa)) folds into the HTH marR-type domain. Positions 66 to 89 (VTTLISVLGVTKQSLNRVLRTLID) form a DNA-binding region, H-T-H motif.

Its function is as follows. Necessary for photosynthetic and respiratory growth. The chain is HTH-type transcriptional regulator PetP (petP) from Rhodobacter capsulatus (strain ATCC BAA-309 / NBRC 16581 / SB1003).